We begin with the raw amino-acid sequence, 146 residues long: MKLNELKPNEGSRRNRKRVGRGTSSGYGKTAGRGQKGQLARTGGKTRLGFEGGQMPLFRRMPKRGFKNVNRKEYAIINLNDLNRFDDGSEVTIDTLKSSGLVKKELAGVKLLANGELKVKLTVKVNKASEAAKKAVEAAGGTVEVI.

The span at 1–13 shows a compositional bias: basic and acidic residues; that stretch reads MKLNELKPNEGSR. The disordered stretch occupies residues 1–54; the sequence is MKLNELKPNEGSRRNRKRVGRGTSSGYGKTAGRGQKGQLARTGGKTRLGFEGGQ. The span at 23–35 shows a compositional bias: gly residues; it reads TSSGYGKTAGRGQ.

It belongs to the universal ribosomal protein uL15 family. As to quaternary structure, part of the 50S ribosomal subunit.

In terms of biological role, binds to the 23S rRNA. This is Large ribosomal subunit protein uL15 from Lactobacillus johnsonii (strain CNCM I-12250 / La1 / NCC 533).